Reading from the N-terminus, the 472-residue chain is Na(+)/H(+) antiporter NhaA (472 aa).

Transmembrane regions (helical) follow at residues 24–44, 66–86, 108–128, 156–176, 196–216, 234–254, 290–310, 312–332, 361–381, and 392–412; these read ISGL…NLPA, LPIG…TVGL, LCAV…TALF, GWAV…ALFA, LLAI…YWFI, VPWI…FEAG, PFSA…VHFE, MSPL…LVVG, MIPA…IASL, and ARFG…VLLS. The interval 422–472 is disordered; sequence AAAAAADEEDDESIDGDGIGQPSHTTEPTTPTEHPGTLADGTASVEIDFRH. The span at 427–436 shows a compositional bias: acidic residues; sequence ADEEDDESID. Residues 445 to 456 show a composition bias toward low complexity; that stretch reads HTTEPTTPTEHP.

The protein belongs to the NhaA Na(+)/H(+) (TC 2.A.33) antiporter family.

It is found in the cell membrane. The enzyme catalyses Na(+)(in) + 2 H(+)(out) = Na(+)(out) + 2 H(+)(in). Na(+)/H(+) antiporter that extrudes sodium in exchange for external protons. This chain is Na(+)/H(+) antiporter NhaA, found in Bifidobacterium longum (strain NCC 2705).